The primary structure comprises 283 residues: Orotidine 5'-phosphate decarboxylase (283 aa).

Catalysis depends on Lys97, which acts as the Proton donor.

This sequence belongs to the OMP decarboxylase family. Type 2 subfamily.

The catalysed reaction is orotidine 5'-phosphate + H(+) = UMP + CO2. It functions in the pathway pyrimidine metabolism; UMP biosynthesis via de novo pathway; UMP from orotate: step 2/2. The protein is Orotidine 5'-phosphate decarboxylase of Clostridium botulinum (strain ATCC 19397 / Type A).